The primary structure comprises 383 residues: Subtelomeric hrmA-associated cluster protein AFUB_078970 (383 aa).

2 disordered regions span residues 118-145 (NPVS…KDDD) and 249-318 (QATQ…SARP). Low complexity predominate over residues 119-134 (PVSEVPESPPSTVKSS). The 47-residue stretch at 318 to 364 (PYSAAEDDILQTLVARGLAWEEIEKEFGLRFAKRTMRSLQMRWSRKL) folds into the Myb-like domain.

Functionally, myb-like domain-containing protein; part of the subtelomeric hrmA-associated cluster (HAC) containing genes that alter the hyphal surface (such as reduced total chitin or increased beta-glucan exposure) and perturb inter-hyphal interactions within the developing biofilms, resulting in a loss of vertically aligned polarized growing filaments. Consequently, this hypoxia-typic morphotype (called H-MORPH) with altered biofilm architecture leads to increased hypoxia fitness, increased host inflammation, rapid disease progression, and mortality in a murine model of invasive aspergillosis. In Aspergillus fumigatus (strain CBS 144.89 / FGSC A1163 / CEA10) (Neosartorya fumigata), this protein is Subtelomeric hrmA-associated cluster protein AFUB_078970.